The following is a 538-amino-acid chain: Cytochrome P450 monooxygenase flvC (538 aa).

The helical transmembrane segment at 17 to 37 (TVLIAGLLVYWVGSAIFLAVL) threads the bilayer. Position 478 (Cys478) interacts with heme.

The protein belongs to the cytochrome P450 family. It depends on heme as a cofactor.

It localises to the membrane. The catalysed reaction is pre-flavunoidine + reduced [NADPH--hemoprotein reductase] + O2 = 10-hydroxy-pre-flavunoidine + oxidized [NADPH--hemoprotein reductase] + H2O + H(+). The protein operates within secondary metabolite biosynthesis; terpenoid biosynthesis. In terms of biological role, cytochrome P450 monooxygenase; part of the gene cluster that mediates the biosynthesis of flavunoidine, an alkaloidal terpenoid with a tetracyclic cage-like core connected to dimethylcadaverine via a C-N bond and acylated with 5,5-dimethyl-L-pipecolate. The tetracyclic core is synthesized by the terpene cyclase flvE and the cytochrome P450 monooxygenase flvD. The terpene cyclase flvE catalyzes the cyclization of farnesyl pyrophosphate (FPP) to form (1R,4R,5S)-(+)-acoradiene and the cytochrome P450 monooxygenase flvD is then responsible for oxidative conversion of (1R,4R,5S)-(+)-acoradiene into the tetracyclic cage present in the final product flavunoidine. In parallel, the N-methyltransferase flvH dimethylates L-lysine to give N,N-dimethyl-L-Lysin which is decarboxylated by flvG to afford dimethylcadaverine. The terpene cyclase-like protein flvF is the enzyme that attaches the dimethylcadaverine precusor at the C-7 of the tetracyclic cage to yield pre-flavunoidine. The cytochrome monooxygenase flvC hydroxylates the C-10 position of pre-flavunoidine whereas the NRPS flvI acylates the terpenoid core at the hydroxylated C-10 with dimethylpipecolate to yield final flavunoidine. The bifunctional enzyme flvA and the dehydrogenase flvB are responsible for the synthesis of the dimethylpipecolate precursor. The PLP-dependent lyase domain of flvA might use L-O-acetyl-homoserine and alpha-keto-isovalerate to form an intermediary ketone that can cyclize intramolecularly to yield an imine. The imine can be reduced by flvB to yield the 6-carboxylated pipecolate. The C-terminal alpha-KG-dependent oxygenase domain of flvA is then proposed to catalyze the decarboxylation to yield dimethylpipecolate. This is Cytochrome P450 monooxygenase flvC from Aspergillus flavus (strain ATCC 200026 / FGSC A1120 / IAM 13836 / NRRL 3357 / JCM 12722 / SRRC 167).